A 415-amino-acid polypeptide reads, in one-letter code: Corticotropin-releasing factor receptor 1 (415 aa).

The N-terminal stretch at 1–23 is a signal peptide; it reads MARHPQLRLVKALLLLGLNPVSA. Over 24–111 the chain is Extracellular; the sequence is SLQDQHCESL…CQEILNEEKK (88 aa). 3 disulfides stabilise this stretch: Cys30–Cys54, Cys44–Cys87, and Cys68–Cys102. N-linked (GlcNAc...) asparagine glycans are attached at residues Asn38, Asn78, and Asn98. Residues 99–108 are important for peptide agonist binding; sequence YSECQEILNE. Residues 112–142 form a helical membrane-spanning segment; sequence SKVHYHVAVIINYLGHCISLVALLVAFVLFL. The Cytoplasmic portion of the chain corresponds to 143–149; sequence RLRSIRC. The chain crosses the membrane as a helical span at residues 150-174; that stretch reads LRNIIHWNLISAFILRNATWFVVQL. Residues 175-189 lie on the Extracellular side of the membrane; it reads TMSPEVHQSNVGWCR. A disulfide bridge connects residues Cys188 and Cys258. Residues 190–218 form a helical membrane-spanning segment; the sequence is LVTAAYNYFHVTNFFWMFGEGCYLHTAIV. At 219 to 225 the chain is on the cytoplasmic side; it reads LTYSTDR. A helical membrane pass occupies residues 226–253; that stretch reads LRKWMFICIGWGVPFPIIVAWAIGKLYY. Topologically, residues 254 to 269 are extracellular; the sequence is DNEKCWFGKRPGVYTD. The helical transmembrane segment at 270–295 threads the bilayer; the sequence is YIYQGPMILVLLINFIFLFNIVRILM. The important for antagonist binding stretch occupies residues 280-290; it reads LLINFIFLFNI. Residues 296–306 lie on the Cytoplasmic side of the membrane; the sequence is TKLRASTTSET. Position 301 is a phosphoserine; by PKA (Ser301). A helical transmembrane segment spans residues 307–331; the sequence is IQYRKAVKATLVLLPLLGITYMLFF. The Extracellular segment spans residues 332–338; that stretch reads VNPGEDE. A helical membrane pass occupies residues 339 to 368; sequence VSRVVFIYFNSFLESFQGFFVSVFYCFLNS. The Cytoplasmic portion of the chain corresponds to 369–415; that stretch reads EVRSAIRKRWHRWQDKHSIRARVARAMSIPTSPTRVSFHSIKQSTAV.

Belongs to the G-protein coupled receptor 2 family. As to quaternary structure, heterodimer; heterodimerizes with GPER1. Interacts (via N-terminal extracellular domain) with CRH and UCN. Interacts with DLG1; this inhibits endocytosis of CRHR1 after agonist binding. In terms of processing, C-terminal Ser or Thr residues may be phosphorylated. Post-translationally, phosphorylation at Ser-301 by PKA prevents maximal coupling to Gq-protein, and thereby negatively regulates downstream signaling. As to expression, expressed abundantly in the pituitary, cerebral cortex, hippocampus, amygdala and cerebellum.

The protein localises to the cell membrane. It is found in the endosome. G-protein coupled receptor for CRH (corticotropin-releasing factor) and UCN (urocortin). Has high affinity for CRH and UCN. Ligand binding causes a conformation change that triggers signaling via guanine nucleotide-binding proteins (G proteins) and down-stream effectors, such as adenylate cyclase. Promotes the activation of adenylate cyclase, leading to increased intracellular cAMP levels. Inhibits the activity of the calcium channel CACNA1H. Required for normal embryonic development of the adrenal gland and for normal hormonal responses to stress. Plays a role in the response to anxiogenic stimuli. This Macaca mulatta (Rhesus macaque) protein is Corticotropin-releasing factor receptor 1 (CRHR1).